A 581-amino-acid polypeptide reads, in one-letter code: MEYYDTDSEDEDEPCSPTVTSVFSANNRLSCSSLKNEKTPLTTVFTKKWLVKSIPMPSDYKRGIYAEDGPYDEVTYVLSGSNFTFTEKSAYVLDIDGLVTFTNLKHKVVRNKRKTIRRAITYVPGDVLMRKHKSIVRVLTCDGVLFIKGLSFASDAALWHVLCSFLNDRPNPHYLCYCTFKTFANILLTLEYRCRVNRALILVNKLLAVGYYLVGNFNYVSPQCSLLGYLGDVLTAQVVAWSRLSQIAITSDSRKIREAFTCMKHLLTVSWLTHERTDLSSDSIYKTLLAHEHIIAGIFCKCDTCRPPPAAINHNTALRVKNWHENNKNRLATDPNLQFRTRWNIEVNGGPELPRLFHSINFPTMYRGILRDRYLRQFYKFQNMVRFHVLTHTCSLQADELLFFQWWNEFMFMYFLRLYLSKCVKSDYTQAVNMFTYYLKAFRLVVCDIARGKCVNPSISELCEKVAHIVDHLVEDTSMASLLREICNFNRIIRDPKHAWIFPHYLRDDTGLQGKVLLEHILRDKFLSLRLDDPLLEHVGLLRSKILNESVKITFNEFTLRQLERSMWLENLLENHRSRLY.

The chain is Protein ORF B from Elephas maximus (Indian elephant).